Consider the following 190-residue polypeptide: Thymidylate kinase (190 aa).

Residue 7-14 (GVDTCGKS) participates in ATP binding.

The protein belongs to the thymidylate kinase family.

It catalyses the reaction dTMP + ATP = dTDP + ADP. Phosphorylation of dTMP to form dTDP in both de novo and salvage pathways of dTTP synthesis. This chain is Thymidylate kinase, found in Wolinella succinogenes (strain ATCC 29543 / DSM 1740 / CCUG 13145 / JCM 31913 / LMG 7466 / NCTC 11488 / FDC 602W) (Vibrio succinogenes).